The following is a 384-amino-acid chain: Chaperone protein DnaJ (384 aa).

The region spanning 4–68 is the J domain; that stretch reads DFYDVLGVSR…EKRQMYDQLG (65 aa). 2 disordered regions span residues 74-105 and 113-132; these read QAQK…GMGG and NNLF…QGRD. The segment covering 79–105 has biased composition (gly residues); it reads GAGGGGGGRGQGNPFGGGGNPFGGMGG. A CR-type zinc finger spans residues 147 to 229; that stretch reads GVERDVTIRR…CRGSGRVRRT (83 aa). Zn(2+) is bound by residues Cys160, Cys163, Cys177, Cys180, Cys203, Cys206, Cys217, and Cys220. CXXCXGXG motif repeat units follow at residues 160–167, 177–184, 203–210, and 217–224; these read CPECDGEG, CSECNGSG, CRACGGEG, and CSECRGSG.

This sequence belongs to the DnaJ family. In terms of assembly, homodimer. It depends on Zn(2+) as a cofactor.

The protein localises to the cytoplasm. Functionally, participates actively in the response to hyperosmotic and heat shock by preventing the aggregation of stress-denatured proteins and by disaggregating proteins, also in an autonomous, DnaK-independent fashion. Unfolded proteins bind initially to DnaJ; upon interaction with the DnaJ-bound protein, DnaK hydrolyzes its bound ATP, resulting in the formation of a stable complex. GrpE releases ADP from DnaK; ATP binding to DnaK triggers the release of the substrate protein, thus completing the reaction cycle. Several rounds of ATP-dependent interactions between DnaJ, DnaK and GrpE are required for fully efficient folding. Also involved, together with DnaK and GrpE, in the DNA replication of plasmids through activation of initiation proteins. In Haloferax mediterranei (strain ATCC 33500 / DSM 1411 / JCM 8866 / NBRC 14739 / NCIMB 2177 / R-4) (Halobacterium mediterranei), this protein is Chaperone protein DnaJ.